We begin with the raw amino-acid sequence, 127 residues long: HTH-type transcriptional regulator ImmR (127 aa).

Residues 1-12 are compositionally biased toward basic and acidic residues; sequence MSLGKRLKEARQ. The disordered stretch occupies residues 1–22; that stretch reads MSLGKRLKEARQKAGYTQKEAA. The HTH cro/C1-type domain occupies 7-61; the sequence is LKEARQKAGYTQKEAAEKLNIGNNNLSNYERDYRDPDTDTLLKLSNLYNVSTDYL. A DNA-binding region (H-T-H motif) is located at residues 18-37; sequence QKEAAEKLNIGNNNLSNYER.

In Bacillus subtilis (strain 168), this protein is HTH-type transcriptional regulator ImmR (immR).